A 290-amino-acid chain; its full sequence is Acetylglutamate kinase (290 aa).

Substrate-binding positions include Gly-60–Gly-61, Arg-82, and Asn-185.

Belongs to the acetylglutamate kinase family. ArgB subfamily.

The protein resides in the cytoplasm. It carries out the reaction N-acetyl-L-glutamate + ATP = N-acetyl-L-glutamyl 5-phosphate + ADP. It functions in the pathway amino-acid biosynthesis; L-arginine biosynthesis; N(2)-acetyl-L-ornithine from L-glutamate: step 2/4. Functionally, catalyzes the ATP-dependent phosphorylation of N-acetyl-L-glutamate. This is Acetylglutamate kinase from Archaeoglobus fulgidus (strain ATCC 49558 / DSM 4304 / JCM 9628 / NBRC 100126 / VC-16).